The sequence spans 238 residues: MKRSKAYRAAAEKINPENFYSPLEAVRLAQQTSTTKYDATVEVAIRLGVDPRKADQMVRGTVNLPHGTGKSPRVAVFAAGEKAAEASAAGADIVGSDDLVARIQEGFLEFDATVATPDQMAKVGRIARVLGPRGLMPNPKTGTVTLDIGKAVSDIKGGKINFRVDKQGNLHIVIGKTNFTDTQLIENYTVALDEIVRVKPSAAKGRYLKKITFTTTMGPGIPVDPNRTRNLLDEGAAA.

The protein belongs to the universal ribosomal protein uL1 family. As to quaternary structure, part of the 50S ribosomal subunit.

Functionally, binds directly to 23S rRNA. The L1 stalk is quite mobile in the ribosome, and is involved in E site tRNA release. Its function is as follows. Protein L1 is also a translational repressor protein, it controls the translation of the L11 operon by binding to its mRNA. The chain is Large ribosomal subunit protein uL1 from Frankia casuarinae (strain DSM 45818 / CECT 9043 / HFP020203 / CcI3).